The following is a 495-amino-acid chain: Aspartyl/glutamyl-tRNA(Asn/Gln) amidotransferase subunit B (495 aa).

The protein belongs to the GatB/GatE family. GatB subfamily. As to quaternary structure, heterotrimer of A, B and C subunits.

The catalysed reaction is L-glutamyl-tRNA(Gln) + L-glutamine + ATP + H2O = L-glutaminyl-tRNA(Gln) + L-glutamate + ADP + phosphate + H(+). It carries out the reaction L-aspartyl-tRNA(Asn) + L-glutamine + ATP + H2O = L-asparaginyl-tRNA(Asn) + L-glutamate + ADP + phosphate + 2 H(+). Allows the formation of correctly charged Asn-tRNA(Asn) or Gln-tRNA(Gln) through the transamidation of misacylated Asp-tRNA(Asn) or Glu-tRNA(Gln) in organisms which lack either or both of asparaginyl-tRNA or glutaminyl-tRNA synthetases. The reaction takes place in the presence of glutamine and ATP through an activated phospho-Asp-tRNA(Asn) or phospho-Glu-tRNA(Gln). The sequence is that of Aspartyl/glutamyl-tRNA(Asn/Gln) amidotransferase subunit B from Acinetobacter baylyi (strain ATCC 33305 / BD413 / ADP1).